We begin with the raw amino-acid sequence, 99 residues long: High mobility group nucleosome-binding domain-containing protein 3 (99 aa).

3 stretches are compositionally biased toward basic and acidic residues: residues 1 to 25 (MPKRKSPENTEGKDGSKVTKQEPTR), 39 to 53 (PEPKPRKTSAKKEPG), and 62 to 72 (GKKEEKQEAGK). The segment at 1 to 99 (MPKRKSPENT…KTESVDNEGE (99 aa)) is disordered. Position 6 is a phosphoserine (S6). Residue T10 is modified to Phosphothreonine. S78 and S93 each carry phosphoserine. Basic and acidic residues predominate over residues 81 to 93 (GETKAEEAQKTES).

Belongs to the HMGN family. Interacts with the ligand binding domain of the thyroid receptor (TR) (in vitro). Requires the presence of thyroid hormone for its interaction. Interacts with transcriptional regulator SEHBP. Interacts with nucleosomes. Expressed in kidney, lung, pancreas, testis, skeletal muscle, heart, thyroid gland, pituitary gland, prostate and uterus. Low expression in liver, spleen, placenta and ovaries.

The protein localises to the nucleus. Functionally, binds to nucleosomes, regulating chromatin structure and consequently, chromatin-dependent processes such as transcription, DNA replication and DNA repair. Affects both insulin and glucagon levels and modulates the expression of pancreatic genes involved in insulin secretion. Regulates the expression of the glucose transporter SLC2A2 by binding specifically to its promoter region and recruiting PDX1 and additional transcription factors. Regulates the expression of SLC6A9, a glycine transporter which regulates the glycine concentration in synaptic junctions in the central nervous system, by binding to its transcription start site. May play a role in ocular development and astrocyte function. The sequence is that of High mobility group nucleosome-binding domain-containing protein 3 (HMGN3) from Homo sapiens (Human).